A 572-amino-acid polypeptide reads, in one-letter code: Proline--tRNA ligase (572 aa).

It belongs to the class-II aminoacyl-tRNA synthetase family. ProS type 1 subfamily. In terms of assembly, homodimer.

It localises to the cytoplasm. The catalysed reaction is tRNA(Pro) + L-proline + ATP = L-prolyl-tRNA(Pro) + AMP + diphosphate. Catalyzes the attachment of proline to tRNA(Pro) in a two-step reaction: proline is first activated by ATP to form Pro-AMP and then transferred to the acceptor end of tRNA(Pro). As ProRS can inadvertently accommodate and process non-cognate amino acids such as alanine and cysteine, to avoid such errors it has two additional distinct editing activities against alanine. One activity is designated as 'pretransfer' editing and involves the tRNA(Pro)-independent hydrolysis of activated Ala-AMP. The other activity is designated 'posttransfer' editing and involves deacylation of mischarged Ala-tRNA(Pro). The misacylated Cys-tRNA(Pro) is not edited by ProRS. The sequence is that of Proline--tRNA ligase from Leuconostoc mesenteroides subsp. mesenteroides (strain ATCC 8293 / DSM 20343 / BCRC 11652 / CCM 1803 / JCM 6124 / NCDO 523 / NBRC 100496 / NCIMB 8023 / NCTC 12954 / NRRL B-1118 / 37Y).